We begin with the raw amino-acid sequence, 363 residues long: Type-2 angiotensin II receptor (363 aa).

The Extracellular portion of the chain corresponds to 1 to 45 (MKGNSTLATTSKNITSGLHFGLVNISGNNESTLNCSQKPSDKHLD). N-linked (GlcNAc...) asparagine glycans are attached at residues Asn-4, Asn-13, Asn-24, Asn-29, and Asn-34. Disulfide bonds link Cys-35-Cys-290 and Cys-117-Cys-195. The helical transmembrane segment at 46–70 (AIPILYYIIFVIGFLVNIVVVTLFC) threads the bilayer. Residues 71 to 80 (CQKGPKKVSS) lie on the Cytoplasmic side of the membrane. A helical membrane pass occupies residues 81–104 (IYIFNLAVADLLLLATLPLWATYY). Angiotensin II is bound by residues Tyr-103 and Tyr-104. Residues 105–114 (SYRYDWLFGP) are Extracellular-facing. Residues 115–140 (VMCKVFGSFLTLNMFASIFFITCMSV) form a helical membrane-spanning segment. Residues 141–159 (DRYQSVIYPFLSQRRNPWQ) lie on the Cytoplasmic side of the membrane. A helical membrane pass occupies residues 160–181 (ASYIVPLVWCMACLSSLPTFYF). The angiotensin II site is built by Arg-182, Tyr-204, and Lys-215. Residues 182 to 206 (RDVRTIEYLGVNACIMAFPPEKYAQ) lie on the Extracellular side of the membrane. A helical transmembrane segment spans residues 207–232 (WSAGIALMKNILGFIIPLIFIATCYF). Residues 233-257 (GIRKHLLKTNSYGKNRITRDQVLKM) are Cytoplasmic-facing. The helical transmembrane segment at 258–281 (AAAVVLAFIICWLPFHVLTFLDAL) threads the bilayer. Position 279 (Asp-279) interacts with angiotensin II. Over 282–294 (AWMGVINSCEVIA) the chain is Extracellular. A helical membrane pass occupies residues 295-320 (VIDLALPFAILLGFTNSCVNPFLYCF). Residue Asp-297 coordinates angiotensin II. The Cytoplasmic segment spans residues 321-363 (VGNRFQQKLRSVFRVPITWLQGKRESMSCRKSSSLREMETFVS). The interval 324–333 (RFQQKLRSVF) is helix VIII.

It belongs to the G-protein coupled receptor 1 family. Interacts with MTUS1. In adult, highly expressed in myometrium with lower levels in adrenal gland and fallopian tube. Expressed in the cerebellum. Very highly expressed in fetal kidney and intestine.

It localises to the cell membrane. In terms of biological role, receptor for angiotensin II, a vasoconstricting peptide. Signals primarily via a non-canonical G-protein- and beta-arrestin independent pathways. Cooperates with MTUS1 to inhibit ERK2 activation and cell proliferation. The chain is Type-2 angiotensin II receptor from Homo sapiens (Human).